The primary structure comprises 133 residues: Profilin-3 (133 aa).

Cysteine 13 and cysteine 117 are joined by a disulfide. Residues 83 to 99 (AVIRGKKGSGGITIKKT) carry the Involved in PIP2 interaction motif. Threonine 113 is modified (phosphothreonine).

The protein belongs to the profilin family. As to quaternary structure, occurs in many kinds of cells as a complex with monomeric actin in a 1:1 ratio. Post-translationally, phosphorylated by MAP kinases.

It is found in the cytoplasm. Its subcellular location is the cytoskeleton. In terms of biological role, binds to actin and affects the structure of the cytoskeleton. At high concentrations, profilin prevents the polymerization of actin, whereas it enhances it at low concentrations. This chain is Profilin-3, found in Corylus avellana (European hazel).